Consider the following 1195-residue polypeptide: MKEIVDAYFKKYGIVNHQLDSMNSFYATPDNPNSVMQQIVDETKVSDDADPGYFVLDPAKTGGHDIRIYYGRVRENGHYVGEQTIFIGKPEIKEASGASNQITPNEARLRDLNYLAPVTLKLRIVEDGIEKGSEIIKVGDLPVMVRSKICTLSEENLDQYIEKNNGPIGLSRREKLQYVGEDPDDPGGYFIIGGSERVIVSLEDLAPNKIMVEWEDRYESKVEVSKVFSQRGGFRALTSMEKGTDGTINVSIPSVAGTVPLVILMKALGLERDVDVHDAIASVPEMEPIIYSNIEDSKNPKVLPPNGVNTTEDAISYLEKRFAAGQAKEFRDKKISQMLDHSLLPHLGDSPSDRIRKAIYLGRMARSLLELSLGIRKEDDKDHLANKRIKLAGDLMDELFRSAFQSVMKDLKYQLEKTYNRKRGIKIRPAVRQDLLTQRVLHAMSTGNWIGGRTGVSQLLDRVSNLSTISHLRRIISPLTRTQPHFEARDLHPTQWGRICPNETPEGQNCGLVKNAALLINVTQGIDPDSVMEILKGMDVREVLEESPKKGRVYLNGDFIGYHDDPRYLVSRIREERRSGRMSDEVNVRYDDNTNEVIVNSDRGRLRRPLLILKDGKTVLDRTMIERLKHGEISFEDLVKQGAIEWLDAEEEEDTYVAVYAYDIPEKCPHCNSYLYRSMVDWVNPGESEITLECGFCHQRFNVPSKLSKENTHLEIDPAMILGVVASIIPYPEHNSSPRITIASAMAKQSLGFAQSNVRIRPDTRGHLLHYPQVPLVRTRVMDYIHYDRRPAGQNFVVAVLSYEGYNIQDALVINKAAIERGLGRSTFFRTYSAEERRYPGGQEDKFEIPTHDIIGARAEEYYKNLDDSGIIFPEAYVEGSDVLIGKTSPPRFLEEGEERLGPQRRRESSVTMRPNESGYVDNVFLTVSESNSRVVKIKVRSERIPELGDKFASRHGQKGVVGLVVPQEDMPFTEDGIIPDLIFNPHSIPSRMTVGHILEMIGGKIASRTGRFIDGTIFSGEPEKSLRDALVKYGFRKSSTEVMYDGITGRRFKADIFVGVIYYQKLHHMVAGKFHARSRGPVQILTRQPTEGRSRQGGLRFGEMERDTLIAHGAAMVIKDRLLDQSDGTVLYVCGNPSCGHIAIYDRRKGTLRCPVCGNTGNIYPIETSYAFKLMRDELISLGVVMRLMLGDMK.

Positions 894–909 are enriched in basic and acidic residues; that stretch reads LEEGEERLGPQRRRES. The interval 894–914 is disordered; that stretch reads LEEGEERLGPQRRRESSVTMR. The Zn(2+) site is built by C1135, C1140, C1155, and C1158.

The protein belongs to the RNA polymerase beta chain family. Part of the RNA polymerase complex. The cofactor is Zn(2+).

The protein resides in the cytoplasm. It catalyses the reaction RNA(n) + a ribonucleoside 5'-triphosphate = RNA(n+1) + diphosphate. In terms of biological role, DNA-dependent RNA polymerase (RNAP) catalyzes the transcription of DNA into RNA using the four ribonucleoside triphosphates as substrates. This subunit is involved in DNA promoter recognition. The polypeptide is DNA-directed RNA polymerase subunit Rpo2 (Thermoplasma acidophilum (strain ATCC 25905 / DSM 1728 / JCM 9062 / NBRC 15155 / AMRC-C165)).